The primary structure comprises 315 residues: Ribose-phosphate pyrophosphokinase (315 aa).

ATP-binding positions include 41 to 43 and 100 to 101; these read DGE and RQ. Mg(2+) is bound by residues His134 and Asp173. Lys196 is a catalytic residue. D-ribose 5-phosphate is bound by residues Arg198, Asp222, and 226–230; that span reads DTAGT.

The protein belongs to the ribose-phosphate pyrophosphokinase family. Class I subfamily. As to quaternary structure, homohexamer. It depends on Mg(2+) as a cofactor.

It localises to the cytoplasm. The enzyme catalyses D-ribose 5-phosphate + ATP = 5-phospho-alpha-D-ribose 1-diphosphate + AMP + H(+). It functions in the pathway metabolic intermediate biosynthesis; 5-phospho-alpha-D-ribose 1-diphosphate biosynthesis; 5-phospho-alpha-D-ribose 1-diphosphate from D-ribose 5-phosphate (route I): step 1/1. Functionally, involved in the biosynthesis of the central metabolite phospho-alpha-D-ribosyl-1-pyrophosphate (PRPP) via the transfer of pyrophosphoryl group from ATP to 1-hydroxyl of ribose-5-phosphate (Rib-5-P). The sequence is that of Ribose-phosphate pyrophosphokinase from Bacillus caldolyticus.